The sequence spans 85 residues: Putative membrane protein insertion efficiency factor (85 aa).

It belongs to the UPF0161 family.

The protein localises to the cell inner membrane. Functionally, could be involved in insertion of integral membrane proteins into the membrane. The polypeptide is Putative membrane protein insertion efficiency factor (Escherichia coli O157:H7).